A 268-amino-acid chain; its full sequence is Thiazole synthase (268 aa).

Residue lysine 96 is the Schiff-base intermediate with DXP of the active site. 1-deoxy-D-xylulose 5-phosphate is bound by residues glycine 157, 185-186, and 207-208; these read AG and NT. Residues 238–268 form a disordered region; sequence PMRPREAASPSSPVEGVPFTPTGPRPGRGPQ. A compositionally biased stretch (pro residues) spans 258–268; sequence PTGPRPGRGPQ.

This sequence belongs to the ThiG family. In terms of assembly, homotetramer. Forms heterodimers with either ThiH or ThiS.

It localises to the cytoplasm. The enzyme catalyses [ThiS sulfur-carrier protein]-C-terminal-Gly-aminoethanethioate + 2-iminoacetate + 1-deoxy-D-xylulose 5-phosphate = [ThiS sulfur-carrier protein]-C-terminal Gly-Gly + 2-[(2R,5Z)-2-carboxy-4-methylthiazol-5(2H)-ylidene]ethyl phosphate + 2 H2O + H(+). It functions in the pathway cofactor biosynthesis; thiamine diphosphate biosynthesis. In terms of biological role, catalyzes the rearrangement of 1-deoxy-D-xylulose 5-phosphate (DXP) to produce the thiazole phosphate moiety of thiamine. Sulfur is provided by the thiocarboxylate moiety of the carrier protein ThiS. In vitro, sulfur can be provided by H(2)S. The chain is Thiazole synthase from Thermus thermophilus (strain ATCC BAA-163 / DSM 7039 / HB27).